The sequence spans 618 residues: Dihydroxy-acid dehydratase (618 aa).

Asp-81 is a Mg(2+) binding site. Cys-122 is a [2Fe-2S] cluster binding site. Residues Asp-123 and Lys-124 each coordinate Mg(2+). Lys-124 carries the N6-carboxylysine modification. Residue Cys-195 participates in [2Fe-2S] cluster binding. A Mg(2+)-binding site is contributed by Glu-491. The active-site Proton acceptor is Ser-517.

The protein belongs to the IlvD/Edd family. Homodimer. [2Fe-2S] cluster is required as a cofactor. Requires Mg(2+) as cofactor.

It catalyses the reaction (2R)-2,3-dihydroxy-3-methylbutanoate = 3-methyl-2-oxobutanoate + H2O. The enzyme catalyses (2R,3R)-2,3-dihydroxy-3-methylpentanoate = (S)-3-methyl-2-oxopentanoate + H2O. It participates in amino-acid biosynthesis; L-isoleucine biosynthesis; L-isoleucine from 2-oxobutanoate: step 3/4. It functions in the pathway amino-acid biosynthesis; L-valine biosynthesis; L-valine from pyruvate: step 3/4. Functionally, functions in the biosynthesis of branched-chain amino acids. Catalyzes the dehydration of (2R,3R)-2,3-dihydroxy-3-methylpentanoate (2,3-dihydroxy-3-methylvalerate) into 2-oxo-3-methylpentanoate (2-oxo-3-methylvalerate) and of (2R)-2,3-dihydroxy-3-methylbutanoate (2,3-dihydroxyisovalerate) into 2-oxo-3-methylbutanoate (2-oxoisovalerate), the penultimate precursor to L-isoleucine and L-valine, respectively. The chain is Dihydroxy-acid dehydratase from Rhodopseudomonas palustris (strain ATCC BAA-98 / CGA009).